A 340-amino-acid polypeptide reads, in one-letter code: Glycerol-3-phosphate dehydrogenase [NAD(P)+] (340 aa).

Residues S15, Y16, H36, and K110 each coordinate NADPH. Sn-glycerol 3-phosphate-binding residues include K110, G139, and T141. A143 contacts NADPH. Residues K195, D248, S258, R259, and N260 each coordinate sn-glycerol 3-phosphate. K195 functions as the Proton acceptor in the catalytic mechanism. An NADPH-binding site is contributed by R259. NADPH is bound by residues V283 and E285.

The protein belongs to the NAD-dependent glycerol-3-phosphate dehydrogenase family.

The protein localises to the cytoplasm. The enzyme catalyses sn-glycerol 3-phosphate + NAD(+) = dihydroxyacetone phosphate + NADH + H(+). It catalyses the reaction sn-glycerol 3-phosphate + NADP(+) = dihydroxyacetone phosphate + NADPH + H(+). It participates in membrane lipid metabolism; glycerophospholipid metabolism. Its function is as follows. Catalyzes the reduction of the glycolytic intermediate dihydroxyacetone phosphate (DHAP) to sn-glycerol 3-phosphate (G3P), the key precursor for phospholipid synthesis. The sequence is that of Glycerol-3-phosphate dehydrogenase [NAD(P)+] from Baumannia cicadellinicola subsp. Homalodisca coagulata.